Here is a 196-residue protein sequence, read N- to C-terminus: Peroxynitrite isomerase (196 aa).

A GXWXGXG motif is present at residues 46–52; that stretch reads GVWRGRG. Residue histidine 186 coordinates heme b.

The protein belongs to the nitrobindin family. In terms of assembly, homodimer. Requires heme b as cofactor.

It catalyses the reaction peroxynitrite = nitrate. The protein operates within nitrogen metabolism. In terms of biological role, heme-binding protein able to scavenge peroxynitrite and to protect free L-tyrosine against peroxynitrite-mediated nitration, by acting as a peroxynitrite isomerase that converts peroxynitrite to nitrate. Therefore, this protein likely plays a role in peroxynitrite sensing and in the detoxification of reactive nitrogen and oxygen species (RNS and ROS, respectively). Is able to bind nitric oxide (NO) in vitro, but may act as a sensor of peroxynitrite levels in vivo. This chain is Peroxynitrite isomerase, found in Salinispora tropica (strain ATCC BAA-916 / DSM 44818 / JCM 13857 / NBRC 105044 / CNB-440).